The primary structure comprises 84 residues: Cell division topological specificity factor (84 aa).

The protein belongs to the MinE family.

Functionally, prevents the cell division inhibition by proteins MinC and MinD at internal division sites while permitting inhibition at polar sites. This ensures cell division at the proper site by restricting the formation of a division septum at the midpoint of the long axis of the cell. The protein is Cell division topological specificity factor of Granulibacter bethesdensis (strain ATCC BAA-1260 / CGDNIH1).